A 699-amino-acid chain; its full sequence is Elongation factor G (699 aa).

Residues 8 to 288 form the tr-type G domain; it reads EDYRNFGIMA…AVVDYLPSPI (281 aa). GTP is bound by residues 17–24, 86–90, and 140–143; these read AHIDAGKT, DTPGH, and NKMD.

The protein belongs to the TRAFAC class translation factor GTPase superfamily. Classic translation factor GTPase family. EF-G/EF-2 subfamily.

It is found in the cytoplasm. In terms of biological role, catalyzes the GTP-dependent ribosomal translocation step during translation elongation. During this step, the ribosome changes from the pre-translocational (PRE) to the post-translocational (POST) state as the newly formed A-site-bound peptidyl-tRNA and P-site-bound deacylated tRNA move to the P and E sites, respectively. Catalyzes the coordinated movement of the two tRNA molecules, the mRNA and conformational changes in the ribosome. In Rhizobium meliloti (strain 1021) (Ensifer meliloti), this protein is Elongation factor G.